A 280-amino-acid polypeptide reads, in one-letter code: Pantothenate synthetase (280 aa).

31–38 serves as a coordination point for ATP; it reads MGNLHAGH. Histidine 38 acts as the Proton donor in catalysis. Glutamine 62 contacts (R)-pantoate. Glutamine 62 provides a ligand contact to beta-alanine. 150 to 153 lines the ATP pocket; it reads GKKD. Position 156 (glutamine 156) interacts with (R)-pantoate. ATP contacts are provided by residues valine 179 and 187–190; that span reads MSSR.

This sequence belongs to the pantothenate synthetase family. In terms of assembly, homodimer.

Its subcellular location is the cytoplasm. It carries out the reaction (R)-pantoate + beta-alanine + ATP = (R)-pantothenate + AMP + diphosphate + H(+). It participates in cofactor biosynthesis; (R)-pantothenate biosynthesis; (R)-pantothenate from (R)-pantoate and beta-alanine: step 1/1. Its function is as follows. Catalyzes the condensation of pantoate with beta-alanine in an ATP-dependent reaction via a pantoyl-adenylate intermediate. This is Pantothenate synthetase from Xanthomonas euvesicatoria pv. vesicatoria (strain 85-10) (Xanthomonas campestris pv. vesicatoria).